Consider the following 205-residue polypeptide: Imidazole glycerol phosphate synthase subunit HisH (205 aa).

The Glutamine amidotransferase type-1 domain maps to 1 to 205 (MIALVDYGGG…FFKMALGDKK (205 aa)). Catalysis depends on Cys79, which acts as the Nucleophile. Catalysis depends on residues His181 and Glu183.

In terms of assembly, heterodimer of HisH and HisF.

Its subcellular location is the cytoplasm. It carries out the reaction 5-[(5-phospho-1-deoxy-D-ribulos-1-ylimino)methylamino]-1-(5-phospho-beta-D-ribosyl)imidazole-4-carboxamide + L-glutamine = D-erythro-1-(imidazol-4-yl)glycerol 3-phosphate + 5-amino-1-(5-phospho-beta-D-ribosyl)imidazole-4-carboxamide + L-glutamate + H(+). The enzyme catalyses L-glutamine + H2O = L-glutamate + NH4(+). The protein operates within amino-acid biosynthesis; L-histidine biosynthesis; L-histidine from 5-phospho-alpha-D-ribose 1-diphosphate: step 5/9. Functionally, IGPS catalyzes the conversion of PRFAR and glutamine to IGP, AICAR and glutamate. The HisH subunit catalyzes the hydrolysis of glutamine to glutamate and ammonia as part of the synthesis of IGP and AICAR. The resulting ammonia molecule is channeled to the active site of HisF. The sequence is that of Imidazole glycerol phosphate synthase subunit HisH from Dehalococcoides mccartyi (strain CBDB1).